The chain runs to 750 residues: Eukaryotic translation initiation factor 3 subunit B (750 aa).

An RRM domain is found at 42 to 128; it reads TFVVVDGLPE…HTLRVNKMTD (87 aa). WD repeat units follow at residues 195 to 234, 236 to 292, 309 to 348, and 519 to 562; these read DRQQ…RLRR, PHPF…PLRS, SAKF…LMDK, and LDKK…EKPE.

The protein belongs to the eIF-3 subunit B family. Component of the eukaryotic translation initiation factor 3 (eIF-3) complex.

The protein resides in the cytoplasm. RNA-binding component of the eukaryotic translation initiation factor 3 (eIF-3) complex, which is involved in protein synthesis of a specialized repertoire of mRNAs and, together with other initiation factors, stimulates binding of mRNA and methionyl-tRNAi to the 40S ribosome. The eIF-3 complex specifically targets and initiates translation of a subset of mRNAs involved in cell proliferation. This is Eukaryotic translation initiation factor 3 subunit B from Chaetomium globosum (strain ATCC 6205 / CBS 148.51 / DSM 1962 / NBRC 6347 / NRRL 1970) (Soil fungus).